A 55-amino-acid chain; its full sequence is MAKGIREKIKLESTAGTGHFYTTSKNKRTTPEKLEFNKYDPVARKHVPYKEVKLK.

The protein belongs to the bacterial ribosomal protein bL33 family.

The sequence is that of Large ribosomal subunit protein bL33 from Azoarcus sp. (strain BH72).